The following is a 722-amino-acid chain: Tegument protein UL46 (722 aa).

A disordered region spans residues Arg-423–Gln-534. Composition is skewed to basic and acidic residues over residues Cys-440–Asn-451 and His-474–Pro-491. The span at Pro-510–Gln-522 shows a compositional bias: pro residues. The segment covering Arg-523 to Gln-534 has biased composition (low complexity).

It belongs to the herpesviridae HHV-1 VP11/12 protein family. Interacts with VP16. Interacts with host LCK, PIK3R1, SHC1 AND GRB2; these interactions promote the activation of the PI3K/AKT pathway. Interacts with host YWHAB. Interacts with ICP0; this interaction targets UL46 for degradation by the proteasome. Post-translationally, phosphorylated by host LCK. The phosphorylation seems to be lymphocyte-specific.

The protein localises to the virion tegument. It is found in the host cell membrane. In terms of biological role, plays a role in the activation of the host PI3K/AKT pathway to promote cell survival. Interacts with and activates host LCK and thereby recruits downstream partners SHC1, GRB2 and PI3KR1 in order to activate the PI3K pathway by phosphorylating host AKT on its activating residues. This mechanism is inhibited by the viral protein US3 that instead promotes incorporation of UL46 into virions. The sequence is that of Tegument protein UL46 from Homo sapiens (Human).